The following is a 180-amino-acid chain: ATP-dependent protease subunit HslV (180 aa).

Thr-2 is an active-site residue. 3 residues coordinate Na(+): Gly-157, Cys-160, and Thr-163.

It belongs to the peptidase T1B family. HslV subfamily. In terms of assembly, a double ring-shaped homohexamer of HslV is capped on each side by a ring-shaped HslU homohexamer. The assembly of the HslU/HslV complex is dependent on binding of ATP.

It is found in the cytoplasm. The enzyme catalyses ATP-dependent cleavage of peptide bonds with broad specificity.. With respect to regulation, allosterically activated by HslU binding. In terms of biological role, protease subunit of a proteasome-like degradation complex believed to be a general protein degrading machinery. This chain is ATP-dependent protease subunit HslV, found in Tolumonas auensis (strain DSM 9187 / NBRC 110442 / TA 4).